Here is a 220-residue protein sequence, read N- to C-terminus: N-(5'-phosphoribosyl)anthranilate isomerase (220 aa).

Belongs to the TrpF family.

The enzyme catalyses N-(5-phospho-beta-D-ribosyl)anthranilate = 1-(2-carboxyphenylamino)-1-deoxy-D-ribulose 5-phosphate. It functions in the pathway amino-acid biosynthesis; L-tryptophan biosynthesis; L-tryptophan from chorismate: step 3/5. The protein is N-(5'-phosphoribosyl)anthranilate isomerase of Xylella fastidiosa (strain M23).